A 427-amino-acid polypeptide reads, in one-letter code: 3-phosphoshikimate 1-carboxyvinyltransferase (427 aa).

Positions 22, 23, and 27 each coordinate 3-phosphoshikimate. Lysine 22 contacts phosphoenolpyruvate. Positions 93 and 122 each coordinate phosphoenolpyruvate. 3-phosphoshikimate-binding residues include serine 167, glutamine 169, aspartate 315, and lysine 342. Glutamine 169 is a phosphoenolpyruvate binding site. The Proton acceptor role is filled by aspartate 315. Arginine 346 and arginine 387 together coordinate phosphoenolpyruvate.

This sequence belongs to the EPSP synthase family. Monomer.

It is found in the cytoplasm. The catalysed reaction is 3-phosphoshikimate + phosphoenolpyruvate = 5-O-(1-carboxyvinyl)-3-phosphoshikimate + phosphate. The protein operates within metabolic intermediate biosynthesis; chorismate biosynthesis; chorismate from D-erythrose 4-phosphate and phosphoenolpyruvate: step 6/7. Catalyzes the transfer of the enolpyruvyl moiety of phosphoenolpyruvate (PEP) to the 5-hydroxyl of shikimate-3-phosphate (S3P) to produce enolpyruvyl shikimate-3-phosphate and inorganic phosphate. The polypeptide is 3-phosphoshikimate 1-carboxyvinyltransferase (Thermus thermophilus (strain ATCC BAA-163 / DSM 7039 / HB27)).